A 417-amino-acid chain; its full sequence is MAEIRNYTMNFGPQHPAAHGVLRLVLELDGEVIQRADPHIGLLHRGTEKLAENRTYLQSVPYMDRLDYVSMMVNEHAYVMAIEKLLGLEVPLRAQYIRVMFDEITRILNHLLWLGAHALDVGAMTVFLYAFREREDLFDCYEAVSGARMHAAYYRPGGVYRDLPDRMPQYEESTVRSKEDVKQLNENRQGSLLDFIEDFTNRFPAYVDEYETLLTDNRIWKQRTVGIGVVSPERAMALGMTGPMLRGSGVAWDLRKKQPYEVYDRLDFDIPIGVNGDCYDRYLVRIEEFRQSNRIIKQCIDWLRKNPGPVISDNTKVAPPPREEMKHDMEALIHHFKLFTEGFHVPAGEAYAAVEHPKGEFGIYLISDGANKPYRLKIRAPGFAHLAALDEMTRGHMIADLVAIIGTQDIVFGEIDR.

Belongs to the complex I 49 kDa subunit family. In terms of assembly, NDH-1 is composed of 14 different subunits. Subunits NuoB, C, D, E, F, and G constitute the peripheral sector of the complex.

The protein resides in the cell inner membrane. It catalyses the reaction a quinone + NADH + 5 H(+)(in) = a quinol + NAD(+) + 4 H(+)(out). Functionally, NDH-1 shuttles electrons from NADH, via FMN and iron-sulfur (Fe-S) centers, to quinones in the respiratory chain. The immediate electron acceptor for the enzyme in this species is believed to be ubiquinone. Couples the redox reaction to proton translocation (for every two electrons transferred, four hydrogen ions are translocated across the cytoplasmic membrane), and thus conserves the redox energy in a proton gradient. The polypeptide is NADH-quinone oxidoreductase subunit D (Methylobacillus flagellatus (strain ATCC 51484 / DSM 6875 / VKM B-1610 / KT)).